Reading from the N-terminus, the 212-residue chain is Large ribosomal subunit protein bL25 (212 aa).

The segment at 181–212 (LSEPKEEVIEEDVEEVSADVPTVSETEEEDAE) is disordered. The segment covering 188–197 (VIEEDVEEVS) has biased composition (acidic residues).

This sequence belongs to the bacterial ribosomal protein bL25 family. CTC subfamily. Part of the 50S ribosomal subunit; part of the 5S rRNA/L5/L18/L25 subcomplex. Contacts the 5S rRNA. Binds to the 5S rRNA independently of L5 and L18.

In terms of biological role, this is one of the proteins that binds to the 5S RNA in the ribosome where it forms part of the central protuberance. The sequence is that of Large ribosomal subunit protein bL25 from Finegoldia magna (strain ATCC 29328 / DSM 20472 / WAL 2508) (Peptostreptococcus magnus).